The chain runs to 487 residues: Iron-sulfur cluster assembly SufBD family protein ycf24 (487 aa).

It belongs to the iron-sulfur cluster assembly SufBD family.

Its subcellular location is the plastid. The protein resides in the chloroplast. This chain is Iron-sulfur cluster assembly SufBD family protein ycf24 (ycf24), found in Pyropia yezoensis (Susabi-nori).